Consider the following 345-residue polypeptide: GTPase Obg (345 aa).

An Obg domain is found at 1 to 158 (MFIDSVKITL…RLVRLELKLI (158 aa)). One can recognise an OBG-type G domain in the interval 159 to 339 (ADVGLVGFPN…LKFMLLEEIK (181 aa)). Residues 165 to 172 (GFPNVGKS), 190 to 194 (FTTLT), 212 to 215 (DIPG), 280 to 283 (SKSD), and 320 to 322 (SSL) each bind GTP. Mg(2+)-binding residues include serine 172 and threonine 192.

It belongs to the TRAFAC class OBG-HflX-like GTPase superfamily. OBG GTPase family. As to quaternary structure, monomer. Requires Mg(2+) as cofactor.

Its subcellular location is the cytoplasm. In terms of biological role, an essential GTPase which binds GTP, GDP and possibly (p)ppGpp with moderate affinity, with high nucleotide exchange rates and a fairly low GTP hydrolysis rate. Plays a role in control of the cell cycle, stress response, ribosome biogenesis and in those bacteria that undergo differentiation, in morphogenesis control. The chain is GTPase Obg from Campylobacter jejuni subsp. doylei (strain ATCC BAA-1458 / RM4099 / 269.97).